The sequence spans 631 residues: Nucleoside triphosphatase I (631 aa).

A Helicase ATP-binding domain is found at 42 to 204; sequence FLGLDSMHSL…TMLVNLLRPG (163 aa). 55 to 62 is a binding site for ATP; it reads HETGVGKT. A DEXH box motif is present at residues 141 to 144; the sequence is DECH. Residues 367-532 enclose the Helicase C-terminal domain; the sequence is KFIDVCLGIL…EFVQLFRVFK (166 aa). The binding to the cap-specific mRNA (nucleoside-2'-O-)-methyltransferase stretch occupies residues 457 to 524; it reads DIFILDMTWN…EIIQSKSKEF (68 aa).

Belongs to the helicase family. NPH I subfamily. Monomer. Interacts (via C-terminus) with RAP94/OPG109 (via N-terminus). Interacts with the cap-specific mRNA (nucleoside-2'-O-)-methyltransferase OPG102.

It is found in the virion. It carries out the reaction a ribonucleoside 5'-triphosphate + H2O = a ribonucleoside 5'-diphosphate + phosphate + H(+). Its function is as follows. DNA-dependent ATPase that acts as a 5' to 3' translocase on single-stranded DNA and thereby plays a role in transcription termination of viral early genes. Uses forward translocation in concert with the viral RNA polymerase RAP94/OPG109 subunit and the capping enzyme/VTF to catalyze release of UUUUUNU-containing nascent RNA from the elongation complex. In addition, acts as a positive elongation factor to assist transcription through problematic sequences. This is Nucleoside triphosphatase I (OPG123) from Bos taurus (Bovine).